Reading from the N-terminus, the 516-residue chain is Ammonium transporter Amt1 (516 aa).

Helical transmembrane passes span 17 to 37 (YVWI…FALL), 59 to 79 (ALGV…VGGL), 101 to 121 (IDWL…SGAV), 130 to 150 (YVVF…GLTW), 170 to 190 (LDFA…LVGA), 214 to 234 (MLLA…FNVG), 258 to 278 (VALV…VVST), 286 to 306 (PLWM…AVPH), 307 to 327 (VTWW…LPAY), 342 to 362 (VFAV…VFAV), and 374 to 394 (VAGV…VFAA). Residues 426–516 (IGESGPDRGV…SAAVDGGENQ (91 aa)) form a disordered region. The segment covering 445-491 (NDVRTDGGNDVRTDGGNDVRTDGGNDVRTDGGNDVRTDGGNDVRTDG) has biased composition (basic and acidic residues).

Belongs to the ammonia transporter channel (TC 1.A.11.2) family. Homotrimer. Interacts with both GlnK1 and GlnK2 after ammonium shock. Interaction is rapid, reversible and dependent on nitrogen source.

It is found in the cell membrane. Involved in the uptake of ammonium/ammonia (NH(4)(+)/NH(3)). Transport is electrogenic. The chain is Ammonium transporter Amt1 from Haloferax mediterranei (strain ATCC 33500 / DSM 1411 / JCM 8866 / NBRC 14739 / NCIMB 2177 / R-4) (Halobacterium mediterranei).